Reading from the N-terminus, the 467-residue chain is Ethanolamine-phosphate phospho-lyase homolog 1 (467 aa).

K307 is subject to N6-(pyridoxal phosphate)lysine.

Belongs to the class-III pyridoxal-phosphate-dependent aminotransferase family. Requires pyridoxal 5'-phosphate as cofactor.

In Caenorhabditis elegans, this protein is Ethanolamine-phosphate phospho-lyase homolog 1.